The chain runs to 356 residues: 11-beta-hydroxysteroid dehydrogenase (356 aa).

A helical; Signal-anchor for type II membrane protein membrane pass occupies residues 10 to 30 (LVVPPAGLLMLAFAWPSLAFF). The short motif at 13-26 (PPAGLLMLAFAWPS) is the Proline-knob element. Residue 54–85 (GASSGIGEQIAYQYAKRRANLVLVARREHRLR) participates in NADP(+) binding. Ser184 contacts substrate. Residue Tyr197 is the Proton acceptor of the active site. Residues 197-201 (YNAAK) and Lys201 contribute to the NADP(+) site.

The protein belongs to the short-chain dehydrogenases/reductases (SDR) family. As to expression, expressed in megagametophytes (at protein level).

Its subcellular location is the lipid droplet. It is found in the membrane. The catalysed reaction is an 11beta-hydroxysteroid + NADP(+) = an 11-oxosteroid + NADPH + H(+). The enzyme catalyses corticosterone + NADP(+) = 11-dehydrocorticosterone + NADPH + H(+). It catalyses the reaction 17beta-estradiol + NADP(+) = estrone + NADPH + H(+). Functionally, has dehydrogenase activity against corticosterone (11 beta-hydroxysteroid) and estradiol (17 beta-hydroxysteroid) in the presence of NADP(+). May be involved in signal transduction regulated by various sterols. In Pinus massoniana (Chinese red pine), this protein is 11-beta-hydroxysteroid dehydrogenase.